Reading from the N-terminus, the 438-residue chain is sn-glycerol-3-phosphate-binding periplasmic protein UgpB (438 aa).

The signal sequence occupies residues 1–23; that stretch reads MISLRHTALGLALSLAFTGQALA. Residues Y65, E89, S144, S270, G307, Y346, and R397 each coordinate sn-glycerol 3-phosphate.

It belongs to the bacterial solute-binding protein 1 family. In terms of assembly, the complex is composed of two ATP-binding proteins (UgpC), two transmembrane proteins (UgpA and UgpE) and a solute-binding protein (UgpB).

It is found in the periplasm. Its function is as follows. Part of the ABC transporter complex UgpBAEC involved in sn-glycerol-3-phosphate (G3P) import. Binds G3P. The polypeptide is sn-glycerol-3-phosphate-binding periplasmic protein UgpB (ugpB) (Salmonella typhi).